The primary structure comprises 295 residues: 33 kDa chaperonin (295 aa).

Disulfide bonds link Cys236–Cys238 and Cys269–Cys272.

Belongs to the HSP33 family. Post-translationally, under oxidizing conditions two disulfide bonds are formed involving the reactive cysteines. Under reducing conditions zinc is bound to the reactive cysteines and the protein is inactive.

It is found in the cytoplasm. Redox regulated molecular chaperone. Protects both thermally unfolding and oxidatively damaged proteins from irreversible aggregation. Plays an important role in the bacterial defense system toward oxidative stress. The chain is 33 kDa chaperonin from Geobacter sp. (strain M21).